The chain runs to 359 residues: DNA polymerase IV (359 aa).

Residues 4–185 (IIHIDMDCYF…LSLRKIPGVG (182 aa)) form the UmuC domain. Residues aspartate 8 and aspartate 103 each contribute to the Mg(2+) site. Glutamate 104 is a catalytic residue.

This sequence belongs to the DNA polymerase type-Y family. Monomer. It depends on Mg(2+) as a cofactor.

It localises to the cytoplasm. The catalysed reaction is DNA(n) + a 2'-deoxyribonucleoside 5'-triphosphate = DNA(n+1) + diphosphate. Poorly processive, error-prone DNA polymerase involved in untargeted mutagenesis. Copies undamaged DNA at stalled replication forks, which arise in vivo from mismatched or misaligned primer ends. These misaligned primers can be extended by PolIV. Exhibits no 3'-5' exonuclease (proofreading) activity. May be involved in translesional synthesis, in conjunction with the beta clamp from PolIII. This chain is DNA polymerase IV, found in Shewanella sp. (strain MR-4).